The chain runs to 393 residues: Thermostable carboxypeptidase 2 (393 aa).

His104, Asp109, and His245 together coordinate Zn(2+). Residue Tyr302 is the Proton donor of the active site. Catalysis depends on Glu373, which acts as the Nucleophile.

It belongs to the peptidase M20 family. In terms of assembly, homotetramer. Requires Zn(2+) as cofactor.

In terms of biological role, can release basic, acidic, aromatic, and, to a lesser extent, aliphatic amino acids. This Saccharolobus solfataricus (strain ATCC 35092 / DSM 1617 / JCM 11322 / P2) (Sulfolobus solfataricus) protein is Thermostable carboxypeptidase 2 (cpsA2).